A 620-amino-acid chain; its full sequence is 1-deoxy-D-xylulose-5-phosphate synthase (620 aa).

Thiamine diphosphate is bound by residues histidine 80 and 121 to 123 (GHS). Position 152 (aspartate 152) interacts with Mg(2+). Thiamine diphosphate contacts are provided by residues 153–154 (GA), asparagine 181, tyrosine 288, and glutamate 370. Asparagine 181 provides a ligand contact to Mg(2+).

The protein belongs to the transketolase family. DXPS subfamily. In terms of assembly, homodimer. It depends on Mg(2+) as a cofactor. The cofactor is thiamine diphosphate.

It catalyses the reaction D-glyceraldehyde 3-phosphate + pyruvate + H(+) = 1-deoxy-D-xylulose 5-phosphate + CO2. Its pathway is metabolic intermediate biosynthesis; 1-deoxy-D-xylulose 5-phosphate biosynthesis; 1-deoxy-D-xylulose 5-phosphate from D-glyceraldehyde 3-phosphate and pyruvate: step 1/1. In terms of biological role, catalyzes the acyloin condensation reaction between C atoms 2 and 3 of pyruvate and glyceraldehyde 3-phosphate to yield 1-deoxy-D-xylulose-5-phosphate (DXP). The chain is 1-deoxy-D-xylulose-5-phosphate synthase from Shigella sonnei (strain Ss046).